The primary structure comprises 302 residues: Nitric oxide synthase-interacting protein (302 aa).

Phosphoserine is present on serine 36. The U-box-like stretch occupies residues 55–75; that stretch reads DPVVTPDGYLYEREAILEYIL. The Nuclear localization signal signature appears at 78 to 101; sequence KKEIARQMKAYEKQRGARREEQKE. Positions 126–156 are disordered; the sequence is LNPFTPKAASAGNGPDDAQPGSSAGPAGKDK.

This sequence belongs to the NOSIP family. In terms of assembly, interacts with NOS1 and NOS3. Interacts with PP2A holoenzyme, containing PPP2CA, PPP2CB, PPP2R1A and PPP2R2A subunits.

The protein resides in the cytoplasm. Its subcellular location is the nucleus. It carries out the reaction S-ubiquitinyl-[E2 ubiquitin-conjugating enzyme]-L-cysteine + [acceptor protein]-L-lysine = [E2 ubiquitin-conjugating enzyme]-L-cysteine + N(6)-ubiquitinyl-[acceptor protein]-L-lysine.. Functionally, E3 ubiquitin-protein ligase that is essential for proper development of the forebrain, the eye, and the face. Catalyzes monoubiquitination of serine/threonine-protein phosphatase 2A (PP2A) catalytic subunit PPP2CA/PPP2CB. Negatively regulates nitric oxide production by inducing NOS1 and NOS3 translocation to actin cytoskeleton and inhibiting their enzymatic activity. This chain is Nitric oxide synthase-interacting protein (NOSIP), found in Bos taurus (Bovine).